Reading from the N-terminus, the 197-residue chain is Dermorphin-1 (197 aa).

An N-terminal signal peptide occupies residues 1 to 20 (MSFLKKSLLLILFLGLVSLS). Residues 21 to 45 (VCKEEKRETEEENENEENHEEGSEM) constitute a propeptide that is removed on maturation. Positions 24–197 (EEKRETEEEN…GYPSGEAKKM (174 aa)) are disordered. Positions 30–39 (EEENENEENH) are enriched in acidic residues. Positions 40–62 (EEGSEMKRYMFHLMDGEAKKRDS) are enriched in basic and acidic residues. Residue methionine 49 is modified to D-methionine. Aspartate 54 is modified (aspartic acid 1-amide). A propeptide spanning residues 56-77 (EAKKRDSEENEIEENHEEGSEM) is cleaved from the precursor. The residue at position 81 (alanine 81) is a D-alanine (Ala). Serine amide is present on serine 86. The segment covering 88 to 97 (EAKKIKRVSE) has biased composition (basic and acidic residues). Positions 88–112 (EAKKIKRVSEEENENEENHEEGSEM) are excised as a propeptide. Alanine 116 is subject to D-alanine (Ala). Serine 121 bears the Serine amide mark. Residues 123–132 (EAKKIKRESE) are compositionally biased toward basic and acidic residues. The propeptide occupies 123–147 (EAKKIKRESEEEKEIEENHEEGSEM). Alanine 151 carries the post-translational modification D-alanine (Ala). Residue serine 156 is modified to Serine amide. The propeptide occupies 158–182 (EAKKIKRESEEENENEENHEEGSEM). Acidic residues predominate over residues 167–176 (EEENENEENH). D-alanine (Ala) is present on alanine 186. Serine 191 is modified (serine amide). A propeptide spanning residues 193-197 (EAKKM) is cleaved from the precursor.

It belongs to the frog skin active peptide (FSAP) family. Dermorphin subfamily. Expressed by the skin glands.

It localises to the secreted. In terms of biological role, dermorphin has a very potent opiate-like activity. It has high affinity and selectivity for mu-type opioid receptors. Functionally, deltorphin has a very potent opiate-like activity. It has high affinity and selectivity for delta-type opioid receptors. The sequence is that of Dermorphin-1 from Phyllomedusa sauvagei (Sauvage's leaf frog).